The sequence spans 75 residues: Putative DNA-directed RNA polymerase subunit omega (75 aa).

It belongs to the RNA polymerase subunit omega family.

It localises to the plastid. It is found in the chloroplast. The catalysed reaction is RNA(n) + a ribonucleoside 5'-triphosphate = RNA(n+1) + diphosphate. May be involved in RNA polymerase activity. The polypeptide is Putative DNA-directed RNA polymerase subunit omega (rpoZ) (Mesostigma viride (Green alga)).